The following is a 419-amino-acid chain: POU domain, class 4, transcription factor 1 (419 aa).

Positions 57–66 (RAEALAAVDI) match the POU-IV box motif. 2 disordered regions span residues 94–117 (STVPLAHHHHHHHHHQALEPGDLL) and 131–197 (AGGA…HSLG). The segment covering 99-108 (AHHHHHHHHH) has biased composition (basic residues). Residues 131-184 (AGGAGAAAGGGGAHDGPGGGGGPGGGGGPGGGPGGGGGGGPGGGGGGPGGGLLG) are compositionally biased toward gly residues. Positions 261–338 (SDTDPRELEA…LQAWLEEAEG (78 aa)) constitute a POU-specific domain. The homeobox DNA-binding region spans 356–415 (KRKRTSIAAPEKRSLEAYFAVQPRPSSEKIAAIAEKLDLKKNVVRVWFCNQRQKQKRMKF).

The protein belongs to the POU transcription factor family. Class-4 subfamily. In terms of assembly, interacts (via N-terminus) with RIT2; the interaction controls POU4F1 transactivation activity on some neuronal target genes. Isoform 1 interacts with POU4F2; this interaction inhibits both POU4F1 DNA-binding and transcriptional activities. Isoform 1 interacts (C-terminus) with ESR1 (via DNA-binding domain); this interaction decreases the estrogen receptor ESR1 transcriptional activity in a DNA- and ligand 17-beta-estradiol-independent manner. As to expression, expressed in the brain and the retina. Present in the developing brain, spinal cord and eye.

Its subcellular location is the nucleus. It is found in the cytoplasm. Its function is as follows. Multifunctional transcription factor with different regions mediating its different effects. Acts by binding (via its C-terminal domain) to sequences related to the consensus octamer motif 5'-ATGCAAAT-3' in the regulatory regions of its target genes. Regulates the expression of specific genes involved in differentiation and survival within a subset of neuronal lineages. It has been shown that activation of some of these genes requires its N-terminal domain, maybe through a neuronal-specific cofactor. Activates BCL2 expression and protects neuronal cells from apoptosis (via the N-terminal domain). Induces neuronal process outgrowth and the coordinate expression of genes encoding synaptic proteins. Exerts its major developmental effects in somatosensory neurons and in brainstem nuclei involved in motor control. Stimulates the binding affinity of the nuclear estrogene receptor ESR1 to DNA estrogen response element (ERE), and hence modulates ESR1-induced transcriptional activity. May positively regulate POU4F2 and POU4F3. Regulates dorsal root ganglion sensory neuron specification and axonal projection into the spinal cord. Plays a role in TNFSF11-mediated terminal osteoclast differentiation. Negatively regulates its own expression interacting directly with a highly conserved autoregulatory domain surrounding the transcription initiation site. Functionally, able to act as transcription factor, cannot regulate the expression of the same subset of genes than isoform 1. Does not have antiapoptotic effect on neuronal cells. This chain is POU domain, class 4, transcription factor 1, found in Homo sapiens (Human).